A 1168-amino-acid polypeptide reads, in one-letter code: DNA-directed RNA polymerase subunit beta (1168 aa).

It belongs to the RNA polymerase beta chain family. The RNAP catalytic core consists of 2 alpha, 1 beta, 1 beta' and 1 omega subunit. When a sigma factor is associated with the core the holoenzyme is formed, which can initiate transcription.

The enzyme catalyses RNA(n) + a ribonucleoside 5'-triphosphate = RNA(n+1) + diphosphate. Its function is as follows. DNA-dependent RNA polymerase catalyzes the transcription of DNA into RNA using the four ribonucleoside triphosphates as substrates. The polypeptide is DNA-directed RNA polymerase subunit beta (Rhodococcus opacus (strain B4)).